A 155-amino-acid polypeptide reads, in one-letter code: Large ribosomal subunit protein bL9c (155 aa).

Belongs to the bacterial ribosomal protein bL9 family.

Its subcellular location is the plastid. It localises to the chloroplast. Functionally, binds to the 23S rRNA. The chain is Large ribosomal subunit protein bL9c from Pyropia yezoensis (Susabi-nori).